Here is a 166-residue protein sequence, read N- to C-terminus: Lipoprotein signal peptidase (166 aa).

The next 4 helical transmembrane spans lie at Ala-9–Leu-29, Ala-45–Leu-65, Trp-71–Leu-91, and Phe-100–Val-120. Catalysis depends on residues Asp-126 and Asp-144. A helical membrane pass occupies residues Trp-135–Ile-155.

This sequence belongs to the peptidase A8 family.

It localises to the cell inner membrane. The catalysed reaction is Release of signal peptides from bacterial membrane prolipoproteins. Hydrolyzes -Xaa-Yaa-Zaa-|-(S,diacylglyceryl)Cys-, in which Xaa is hydrophobic (preferably Leu), and Yaa (Ala or Ser) and Zaa (Gly or Ala) have small, neutral side chains.. It functions in the pathway protein modification; lipoprotein biosynthesis (signal peptide cleavage). In terms of biological role, this protein specifically catalyzes the removal of signal peptides from prolipoproteins. This Burkholderia multivorans (strain ATCC 17616 / 249) protein is Lipoprotein signal peptidase.